A 486-amino-acid chain; its full sequence is Glycogen synthase (486 aa).

K15 contributes to the ADP-alpha-D-glucose binding site.

Belongs to the glycosyltransferase 1 family. Bacterial/plant glycogen synthase subfamily.

It carries out the reaction [(1-&gt;4)-alpha-D-glucosyl](n) + ADP-alpha-D-glucose = [(1-&gt;4)-alpha-D-glucosyl](n+1) + ADP + H(+). Its pathway is glycan biosynthesis; glycogen biosynthesis. Its function is as follows. Synthesizes alpha-1,4-glucan chains using ADP-glucose. This chain is Glycogen synthase, found in Pseudothermotoga lettingae (strain ATCC BAA-301 / DSM 14385 / NBRC 107922 / TMO) (Thermotoga lettingae).